The sequence spans 86 residues: Large ribosomal subunit protein bL27c (86 aa).

The interval 1–20 (MAHKKGSGSTRNGRDSNAQR) is disordered. The span at 7 to 19 (SGSTRNGRDSNAQ) shows a compositional bias: polar residues.

It belongs to the bacterial ribosomal protein bL27 family.

Its subcellular location is the plastid. It is found in the chloroplast. This is Large ribosomal subunit protein bL27c (rpl27) from Guillardia theta (Cryptophyte).